The chain runs to 535 residues: Glutamate--cysteine ligase (535 aa).

The protein belongs to the glutamate--cysteine ligase type 1 family. Type 1 subfamily.

The enzyme catalyses L-cysteine + L-glutamate + ATP = gamma-L-glutamyl-L-cysteine + ADP + phosphate + H(+). It participates in sulfur metabolism; glutathione biosynthesis; glutathione from L-cysteine and L-glutamate: step 1/2. The chain is Glutamate--cysteine ligase from Pseudomonas syringae pv. syringae.